The following is a 622-amino-acid chain: Putative DEAD-box ATP-dependent RNA helicase 44 (622 aa).

Residues 50 to 97 form a disordered region; the sequence is DRRSIVQISRSNSDNDDGNRPRDVKRERHRSHDHDRNRESDREFRERE. The span at 66–97 shows a compositional bias: basic and acidic residues; it reads DGNRPRDVKRERHRSHDHDRNRESDREFRERE. The 196-residue stretch at 241–436 folds into the Helicase ATP-binding domain; the sequence is IPLGLEQRDV…RKFLRNPVVV (196 aa). Residue 254–261 coordinates ATP; the sequence is SATGSGKT. The DEAD box motif lies at 367 to 370; the sequence is DEAD. The Helicase C-terminal domain occupies 460–606; sequence RLKKLIDDLG…LVPPELARHE (147 aa).

The protein belongs to the DEAD box helicase family. DDX23/PRP28 subfamily.

It carries out the reaction ATP + H2O = ADP + phosphate + H(+). This Arabidopsis thaliana (Mouse-ear cress) protein is Putative DEAD-box ATP-dependent RNA helicase 44 (RH44).